The sequence spans 702 residues: Arylphorin (702 aa).

Residues 1–16 (MQTVLFLAALVSLAAA) form the signal peptide. Asn-211 and Asn-481 each carry an N-linked (GlcNAc...) asparagine glycan.

Belongs to the hemocyanin family. Hemolymph.

Its subcellular location is the secreted. Its function is as follows. Larval storage protein (LSP) which may serve as a store of amino acids for synthesis of adult proteins. Binds the A.niger cell wall component alpha-1,3-glucan, a fungal pathogen-associated molecular pattern (PAMP) that activates the host immune response. This is Arylphorin (LOC113516268) from Galleria mellonella (Greater wax moth).